We begin with the raw amino-acid sequence, 505 residues long: ATP synthase subunit alpha, chloroplastic (505 aa).

170–177 (GDRQTGKT) is a binding site for ATP.

The protein belongs to the ATPase alpha/beta chains family. In terms of assembly, F-type ATPases have 2 components, CF(1) - the catalytic core - and CF(0) - the membrane proton channel. CF(1) has five subunits: alpha(3), beta(3), gamma(1), delta(1), epsilon(1). CF(0) has four main subunits: a, b, b' and c.

The protein localises to the plastid. It is found in the chloroplast thylakoid membrane. The enzyme catalyses ATP + H2O + 4 H(+)(in) = ADP + phosphate + 5 H(+)(out). In terms of biological role, produces ATP from ADP in the presence of a proton gradient across the membrane. The alpha chain is a regulatory subunit. This is ATP synthase subunit alpha, chloroplastic from Carica papaya (Papaya).